A 180-amino-acid chain; its full sequence is uncharacterized protein (180 aa).

Positions 1–31 (MSTYEEEHGIQQNSRDYQEVGGTSQEEQRRQ) are disordered. An N-acetylserine modification is found at Ser2. An RING-type zinc finger spans residues 109 to 153 (CSICYTNYLEDEYPLVVELPHCHHKFDLECLSVWLSRSTTCPLCR).

This is an uncharacterized protein from Saccharomyces cerevisiae (strain ATCC 204508 / S288c) (Baker's yeast).